A 620-amino-acid polypeptide reads, in one-letter code: NADPH-dependent diflavin oxidoreductase 1 (620 aa).

Positions 6 to 168 (IAILYGSETG…VYSEFEKRVL (163 aa)) constitute a Flavodoxin-like domain. FMN is bound by residues 12–17 (SETGTA), 59–62 (STTG), and 106–115 (LGDSSYSKFN). The 254-residue stretch at 222-475 (SSVKYGTVVT…LLPAGKQDRP (254 aa)) folds into the FAD-binding FR-type domain. FAD contacts are provided by residues Arg-380, 410 to 413 (RFFS), and 442 to 445 (GLCT). An NADP(+)-binding site is contributed by 535–536 (SR). An FAD-binding site is contributed by Trp-620.

This sequence belongs to the NADPH-dependent diflavin oxidoreductase NDOR1 family. The protein in the N-terminal section; belongs to the flavodoxin family. It in the C-terminal section; belongs to the flavoprotein pyridine nucleotide cytochrome reductase family. Interacts with DRE2; as part of the cytosolic iron-sulfur (Fe-S) protein assembly (CIA) machinery. It depends on FAD as a cofactor. FMN serves as cofactor.

It is found in the cytoplasm. The protein localises to the mitochondrion. The catalysed reaction is 2 oxidized [2Fe-2S]-[protein] + NADPH = 2 reduced [2Fe-2S]-[protein] + NADP(+) + H(+). NADPH-dependent reductase which is a central component of the cytosolic iron-sulfur (Fe-S) protein assembly (CIA) machinery. Transfers electrons from NADPH via its FAD and FMN prosthetic groups to the [2Fe-2S] cluster of DRE2, another key component of the CIA machinery. In turn, this reduced cluster provides electrons for assembly of cytosolic iron-sulfur cluster proteins. Positively controls H(2)O(2)-induced cell death. This Eremothecium gossypii (strain ATCC 10895 / CBS 109.51 / FGSC 9923 / NRRL Y-1056) (Yeast) protein is NADPH-dependent diflavin oxidoreductase 1.